The chain runs to 236 residues: 2,3,4,5-tetrahydropyridine-2,6-dicarboxylate N-acetyltransferase (236 aa).

Belongs to the transferase hexapeptide repeat family. DapH subfamily.

The catalysed reaction is (S)-2,3,4,5-tetrahydrodipicolinate + acetyl-CoA + H2O = L-2-acetamido-6-oxoheptanedioate + CoA. It participates in amino-acid biosynthesis; L-lysine biosynthesis via DAP pathway; LL-2,6-diaminopimelate from (S)-tetrahydrodipicolinate (acetylase route): step 1/3. Catalyzes the transfer of an acetyl group from acetyl-CoA to tetrahydrodipicolinate. The chain is 2,3,4,5-tetrahydropyridine-2,6-dicarboxylate N-acetyltransferase from Clostridium botulinum (strain Alaska E43 / Type E3).